The chain runs to 143 residues: Large ribosomal subunit protein uL11 (143 aa).

It belongs to the universal ribosomal protein uL11 family. Part of the ribosomal stalk of the 50S ribosomal subunit. Interacts with L10 and the large rRNA to form the base of the stalk. L10 forms an elongated spine to which L12 dimers bind in a sequential fashion forming a multimeric L10(L12)X complex. Post-translationally, one or more lysine residues are methylated.

In terms of biological role, forms part of the ribosomal stalk which helps the ribosome interact with GTP-bound translation factors. The protein is Large ribosomal subunit protein uL11 of Leptothrix cholodnii (strain ATCC 51168 / LMG 8142 / SP-6) (Leptothrix discophora (strain SP-6)).